Reading from the N-terminus, the 780-residue chain is Semaphorin-3G (780 aa).

Residues 1–22 (MDPSAWAICCLLGSLLFHVGIP) form the signal peptide. The region spanning 32 to 519 (RLRLSYRDLL…SPLGVARLQL (488 aa)) is the Sema domain. N-linked (GlcNAc...) asparagine glycosylation is present at Asn44. Cysteines 105 and 116 form a disulfide. Asn127 carries an N-linked (GlcNAc...) asparagine glycan. 5 disulfides stabilise this stretch: Cys134–Cys143, Cys270–Cys382, Cys294–Cys342, Cys522–Cys540, and Cys603–Cys655. The Ig-like C2-type domain occupies 569–671 (PAVQCLGQGQ…FSQTVVRFAL (103 aa)). N-linked (GlcNAc...) asparagine glycosylation occurs at Asn652.

Belongs to the semaphorin family. As to expression, highly expressed in lung and kidney. Weakly expressed in brain.

It is found in the secreted. Has chemorepulsive activities for sympathetic axons. Ligand of NRP2. In Mus musculus (Mouse), this protein is Semaphorin-3G (Sema3g).